Reading from the N-terminus, the 379-residue chain is tRNA(Met) cytidine acetate ligase (379 aa).

ATP is bound by residues Ile7–His20, Gly100, Asn153, and Arg178.

Belongs to the TmcAL family.

The protein resides in the cytoplasm. It catalyses the reaction cytidine(34) in elongator tRNA(Met) + acetate + ATP = N(4)-acetylcytidine(34) in elongator tRNA(Met) + AMP + diphosphate. In terms of biological role, catalyzes the formation of N(4)-acetylcytidine (ac(4)C) at the wobble position of elongator tRNA(Met), using acetate and ATP as substrates. First activates an acetate ion to form acetyladenylate (Ac-AMP) and then transfers the acetyl group to tRNA to form ac(4)C34. The chain is tRNA(Met) cytidine acetate ligase from Staphylococcus aureus (strain MRSA252).